A 172-amino-acid polypeptide reads, in one-letter code: Photosystem I assembly protein Ycf3 (172 aa).

3 TPR repeats span residues 35–68 (AFSYYRNGMSAQAEGEYAEALQNYYEAMRLEVDA), 72–105 (SYILYNIGLIHTSNGEHGRALEYYYQALERNPSL), and 120–153 (GEQAIENGQSEISQILFEKAADYWKEAIRLAPTN).

It belongs to the Ycf3 family.

The protein localises to the plastid. It localises to the chloroplast thylakoid membrane. In terms of biological role, essential for the assembly of the photosystem I (PSI) complex. May act as a chaperone-like factor to guide the assembly of the PSI subunits. The chain is Photosystem I assembly protein Ycf3 from Chlamydomonas reinhardtii (Chlamydomonas smithii).